Here is a 122-residue protein sequence, read N- to C-terminus: Small ribosomal subunit protein uS13 (122 aa).

The disordered stretch occupies residues 95-122; sequence GLPVRGQRTKTNARTRKGPKKTIAGKKK.

This sequence belongs to the universal ribosomal protein uS13 family. Part of the 30S ribosomal subunit. Forms a loose heterodimer with protein S19. Forms two bridges to the 50S subunit in the 70S ribosome.

Located at the top of the head of the 30S subunit, it contacts several helices of the 16S rRNA. In the 70S ribosome it contacts the 23S rRNA (bridge B1a) and protein L5 of the 50S subunit (bridge B1b), connecting the 2 subunits; these bridges are implicated in subunit movement. Contacts the tRNAs in the A and P-sites. The sequence is that of Small ribosomal subunit protein uS13 from Corynebacterium glutamicum (strain ATCC 13032 / DSM 20300 / JCM 1318 / BCRC 11384 / CCUG 27702 / LMG 3730 / NBRC 12168 / NCIMB 10025 / NRRL B-2784 / 534).